The following is a 382-amino-acid chain: cAMP-dependent protein kinase type I-alpha regulatory subunit (382 aa).

Ala-2 carries the N-acetylalanine modification. Residues 2-136 (ATSSSSSSEE…AALAKAIEKN (135 aa)) are dimerization and phosphorylation. Residues 62–96 (TKQLLNQQKSGSRSDSREDEISPPPPMNPVVKGRR) form a disordered region. The short motif at 97–101 (RRGAI) is the Pseudophosphorylation motif element. Residues 138 to 255 (LFAH…SKVS), Glu-203, Arg-212, 256 to 382 (ILES…SLSV), Glu-327, and Arg-336 each bind 3',5'-cyclic AMP.

Belongs to the cAMP-dependent kinase regulatory chain family. The inactive form of the enzyme is composed of two regulatory chains and two catalytic chains. Activation by cAMP produces two active catalytic monomers and a regulatory dimer that binds four cAMP molecules. In terms of processing, the pseudophosphorylation site binds to the substrate-binding region of the catalytic chain but is not phosphorylated. The physiological significance of phosphorylations by other kinases is unclear.

The protein localises to the cell membrane. This is cAMP-dependent protein kinase type I-alpha regulatory subunit (PRKAR1A) from Gallus gallus (Chicken).